The sequence spans 129 residues: Small ribosomal subunit protein uS11 (129 aa).

It belongs to the universal ribosomal protein uS11 family. In terms of assembly, part of the 30S ribosomal subunit. Interacts with proteins S7 and S18. Binds to IF-3.

Located on the platform of the 30S subunit, it bridges several disparate RNA helices of the 16S rRNA. Forms part of the Shine-Dalgarno cleft in the 70S ribosome. The sequence is that of Small ribosomal subunit protein uS11 from Bradyrhizobium diazoefficiens (strain JCM 10833 / BCRC 13528 / IAM 13628 / NBRC 14792 / USDA 110).